Here is a 288-residue protein sequence, read N- to C-terminus: Alpha/beta hydrolase domain-containing protein 17B (288 aa).

Catalysis depends on charge relay system residues Ser-170, Asp-235, and His-264. At Ser-282 the chain carries Phosphoserine.

Belongs to the AB hydrolase superfamily. ABHD17 family. Post-translationally, palmitoylated on cysteine residues located in a cysteine cluster at the N-terminus which promotes membrane localization. Palmitoylation is required for post-synaptic localization and for depalmitoylating activity towards DLG4/PSD95. As to expression, expressed in brain.

The protein localises to the cell membrane. Its subcellular location is the recycling endosome membrane. It localises to the cell projection. It is found in the dendritic spine. The protein resides in the postsynaptic density membrane. The enzyme catalyses S-hexadecanoyl-L-cysteinyl-[protein] + H2O = L-cysteinyl-[protein] + hexadecanoate + H(+). Its function is as follows. Hydrolyzes fatty acids from S-acylated cysteine residues in proteins. Has depalmitoylating activity towards DLG4/PSD95. Has depalmitoylating activity towards GAP43. Has depalmitoylating activity towards MAP6. Has depalmitoylating activity towards NRAS. This is Alpha/beta hydrolase domain-containing protein 17B from Mus musculus (Mouse).